We begin with the raw amino-acid sequence, 221 residues long: 7-cyano-7-deazaguanine synthase (221 aa).

10–20 (FSGGQDSTTCL) is an ATP binding site. Zn(2+) contacts are provided by cysteine 187, cysteine 196, cysteine 199, and cysteine 202.

Belongs to the QueC family. Homodimer. It depends on Zn(2+) as a cofactor.

The catalysed reaction is 7-carboxy-7-deazaguanine + NH4(+) + ATP = 7-cyano-7-deazaguanine + ADP + phosphate + H2O + H(+). The protein operates within purine metabolism; 7-cyano-7-deazaguanine biosynthesis. Functionally, catalyzes the ATP-dependent conversion of 7-carboxy-7-deazaguanine (CDG) to 7-cyano-7-deazaguanine (preQ(0)). In Shouchella clausii (strain KSM-K16) (Alkalihalobacillus clausii), this protein is 7-cyano-7-deazaguanine synthase.